The following is a 75-amino-acid chain: Molt-inhibiting hormone (75 aa).

Intrachain disulfides connect Cys7–Cys44, Cys24–Cys40, and Cys27–Cys53. An Alanine amide modification is found at Ala75.

Belongs to the arthropod CHH/MIH/GIH/VIH hormone family.

It localises to the secreted. Functionally, inhibits Y-organs where molting hormone (ecdysteroid) is secreted. A molting cycle is initiated when MIH secretion diminishes or stops. The sequence is that of Molt-inhibiting hormone from Procambarus clarkii (Red swamp crayfish).